A 51-amino-acid polypeptide reads, in one-letter code: Large ribosomal subunit protein eL39 (51 aa).

Residues 32–51 (KGSVKQHPKMRHWRRKNLKK) are disordered. Basic residues predominate over residues 33–51 (GSVKQHPKMRHWRRKNLKK).

It belongs to the eukaryotic ribosomal protein eL39 family.

The polypeptide is Large ribosomal subunit protein eL39 (Methanococcus maripaludis (strain C5 / ATCC BAA-1333)).